The following is a 1044-amino-acid chain: DEMETER-like protein 3 (1044 aa).

The segment covering Met1–Thr15 has biased composition (polar residues). The segment at Met1–Leu107 is disordered. A compositionally biased stretch (basic and acidic residues) spans Lys16–His30. Residues Thr38–Ile53 show a composition bias toward basic residues. Over residues Lys54 to Ser66 the composition is skewed to basic and acidic residues. Basic residues predominate over residues Gly71–Arg89. Residues Lys348 to Pro445 are DEMETER. Residues Cys678, Cys685, Cys688, and Cys694 each coordinate [4Fe-4S] cluster. Positions Val1024–Ile1044 are disordered.

It belongs to the DNA glycosylase family. DEMETER subfamily. It depends on [4Fe-4S] cluster as a cofactor.

It is found in the nucleus. Potential transcriptional activator that may act by nicking the target promoter. Catalyzes the release of 5-methylcytosine (5-meC) from DNA by a glycosylase/lyase mechanism. This chain is DEMETER-like protein 3 (DML3), found in Arabidopsis thaliana (Mouse-ear cress).